Consider the following 116-residue polypeptide: Large ribosomal subunit protein bL17 (116 aa).

This sequence belongs to the bacterial ribosomal protein bL17 family. Part of the 50S ribosomal subunit. Contacts protein L32.

The sequence is that of Large ribosomal subunit protein bL17 from Gloeobacter violaceus (strain ATCC 29082 / PCC 7421).